A 256-amino-acid polypeptide reads, in one-letter code: Imidazole glycerol phosphate synthase subunit HisF (256 aa).

Catalysis depends on residues Asp-12 and Asp-131.

This sequence belongs to the HisA/HisF family. As to quaternary structure, heterodimer of HisH and HisF.

The protein localises to the cytoplasm. The catalysed reaction is 5-[(5-phospho-1-deoxy-D-ribulos-1-ylimino)methylamino]-1-(5-phospho-beta-D-ribosyl)imidazole-4-carboxamide + L-glutamine = D-erythro-1-(imidazol-4-yl)glycerol 3-phosphate + 5-amino-1-(5-phospho-beta-D-ribosyl)imidazole-4-carboxamide + L-glutamate + H(+). The protein operates within amino-acid biosynthesis; L-histidine biosynthesis; L-histidine from 5-phospho-alpha-D-ribose 1-diphosphate: step 5/9. Functionally, IGPS catalyzes the conversion of PRFAR and glutamine to IGP, AICAR and glutamate. The HisF subunit catalyzes the cyclization activity that produces IGP and AICAR from PRFAR using the ammonia provided by the HisH subunit. This chain is Imidazole glycerol phosphate synthase subunit HisF, found in Micrococcus luteus (strain ATCC 4698 / DSM 20030 / JCM 1464 / CCM 169 / CCUG 5858 / IAM 1056 / NBRC 3333 / NCIMB 9278 / NCTC 2665 / VKM Ac-2230) (Micrococcus lysodeikticus).